A 92-amino-acid chain; its full sequence is Small ribosomal subunit protein uS19c (92 aa).

Belongs to the universal ribosomal protein uS19 family.

The protein resides in the plastid. Its subcellular location is the chloroplast. In terms of biological role, protein S19 forms a complex with S13 that binds strongly to the 16S ribosomal RNA. In Physcomitrium patens (Spreading-leaved earth moss), this protein is Small ribosomal subunit protein uS19c.